The sequence spans 150 residues: Macrodomain Ter protein (150 aa).

The protein belongs to the MatP family. Homodimer.

The protein resides in the cytoplasm. Required for spatial organization of the terminus region of the chromosome (Ter macrodomain) during the cell cycle. Prevents early segregation of duplicated Ter macrodomains during cell division. Binds specifically to matS, which is a 13 bp signature motif repeated within the Ter macrodomain. The polypeptide is Macrodomain Ter protein (Citrobacter koseri (strain ATCC BAA-895 / CDC 4225-83 / SGSC4696)).